Here is a 366-residue protein sequence, read N- to C-terminus: Ubiquitin carboxyl-terminal hydrolase 46 (366 aa).

Residues 35-365 (FGLVNFGNTC…SGYILFYQSR (331 aa)) enclose the USP domain. Cys44 (nucleophile) is an active-site residue. The Zn(2+) site is built by Cys182, Cys185, Cys229, and Cys232. His313 (proton acceptor) is an active-site residue.

It belongs to the peptidase C19 family. USP12/USP46 subfamily. In terms of assembly, interacts with WDR48. Interacts with WDR20. Interacts with DMWD. Component of the USP46/WDR20/WDR48 deubiquitinating complex. In terms of tissue distribution, detected in lung and spleen, and at lower levels in brain, kidney, testis and liver.

It localises to the cytoplasm. The enzyme catalyses Thiol-dependent hydrolysis of ester, thioester, amide, peptide and isopeptide bonds formed by the C-terminal Gly of ubiquitin (a 76-residue protein attached to proteins as an intracellular targeting signal).. Functionally, deubiquitinating enzyme that plays a role in behavior, possibly by regulating GABA action. May act by mediating the deubiquitination of GAD1/GAD67. Has almost no deubiquitinating activity by itself and requires the interaction with WDR48 to have a high activity. Not involved in deubiquitination of monoubiquitinated FANCD2. The chain is Ubiquitin carboxyl-terminal hydrolase 46 from Rattus norvegicus (Rat).